The sequence spans 483 residues: MIPVILSGGSGSRLWPLSRKQFPKQFLALTGEHTLFQQTLQRLVFEGMQEPIVVCNKDHRFIVNEQLAALNLETQAILMEPFGRNTAPAVALTAMKLVNEGNDGLMLVLPADHVIEDQKALQRALALATVTAERGEMVLFGVPANKPETGYGYIKSTADALLPEGVSRVSQFVEKPDEKRAKEFVEAGGYYWNSGMFLFRASRFLEELKKHDPDIYDTCLLTLERSVQDGDALEIDASTFACCPDNSIDYAVMEKTQRACVVPLSAGWSDVGCWSSLWEVNAKDAHGNVTKGDVVIQDSRNCMIHGNGKLVSVIGLDNIVVVETKDAMMIAHKDKVQGVKQMVATLNEQGRTETQNHLEVYRPWGSYDSVDMGGRFQVKRISVKPGACLSLQMHHHRAEHWIVVSGTAQVTCDENVFLLTENQSTYIPIASVHRLRNPGKIPLEIIEVQSGSYLGEDDIERFEDIYGRSNALEAGVKTQTIAR.

The protein belongs to the mannose-6-phosphate isomerase type 2 family. In terms of assembly, monomer. Co(2+) is required as a cofactor.

The enzyme catalyses D-mannose 6-phosphate = D-fructose 6-phosphate. The catalysed reaction is alpha-D-mannose 1-phosphate + GTP + H(+) = GDP-alpha-D-mannose + diphosphate. It functions in the pathway nucleotide-sugar biosynthesis; GDP-alpha-D-mannose biosynthesis; GDP-alpha-D-mannose from alpha-D-mannose 1-phosphate (GTP route): step 1/1. Its pathway is nucleotide-sugar biosynthesis; GDP-alpha-D-mannose biosynthesis; alpha-D-mannose 1-phosphate from D-fructose 6-phosphate: step 1/2. Functionally, produces a precursor for alginate polymerization. The alginate layer provides a protective barrier against host immune defenses and antibiotics. The protein is Alginate biosynthesis protein AlgA (algA) of Pseudomonas syringae pv. tomato (strain ATCC BAA-871 / DC3000).